A 296-amino-acid chain; its full sequence is NAD kinase (296 aa).

Asp72 functions as the Proton acceptor in the catalytic mechanism. NAD(+)-binding positions include 72–73 (DG), 146–147 (ND), Arg157, Lys174, Asp176, 187–192 (TAYALS), and Gln247.

The protein belongs to the NAD kinase family. A divalent metal cation serves as cofactor.

The protein localises to the cytoplasm. The catalysed reaction is NAD(+) + ATP = ADP + NADP(+) + H(+). Functionally, involved in the regulation of the intracellular balance of NAD and NADP, and is a key enzyme in the biosynthesis of NADP. Catalyzes specifically the phosphorylation on 2'-hydroxyl of the adenosine moiety of NAD to yield NADP. The protein is NAD kinase of Pseudomonas fluorescens (strain ATCC BAA-477 / NRRL B-23932 / Pf-5).